A 445-amino-acid polypeptide reads, in one-letter code: tRNA modification GTPase MnmE (445 aa).

Positions 20, 79, and 119 each coordinate (6S)-5-formyl-5,6,7,8-tetrahydrofolate. Residues 215-371 (GLKLAIIGPP…ILKNIENIAE (157 aa)) form the TrmE-type G domain. A K(+)-binding site is contributed by N225. Residues 225–230 (NVGKSS), 244–250 (SNIAGTT), and 269–272 (DTAG) contribute to the GTP site. S229 is a Mg(2+) binding site. The K(+) site is built by S244, I246, and T249. Mg(2+) is bound at residue T250. K445 serves as a coordination point for (6S)-5-formyl-5,6,7,8-tetrahydrofolate.

It belongs to the TRAFAC class TrmE-Era-EngA-EngB-Septin-like GTPase superfamily. TrmE GTPase family. In terms of assembly, homodimer. Heterotetramer of two MnmE and two MnmG subunits. It depends on K(+) as a cofactor.

It is found in the cytoplasm. Its function is as follows. Exhibits a very high intrinsic GTPase hydrolysis rate. Involved in the addition of a carboxymethylaminomethyl (cmnm) group at the wobble position (U34) of certain tRNAs, forming tRNA-cmnm(5)s(2)U34. This chain is tRNA modification GTPase MnmE, found in Rickettsia conorii (strain ATCC VR-613 / Malish 7).